The primary structure comprises 446 residues: MREIVSVHLQTGQCGNQVGSAFWQTISGEHGLDSSGVYGGTSDQQLDRLNVYFNEASNNKYVPRAVLVDLEPGTMDAVRSGPFGQLFRPDNFVFGQSGAGNNWAKGHYTEGAELVDQVLDVVRREAENCECLQGFQITHSLGGGTGSGMGTLLISKIREEFPDRMMATFSVVPSPKVSDTVVEPYNATLSMHQLVENSDKTFCIDNEALYDICMRTLKLSNPSYGDLNHLVSAVMSGVSTSLRFPGQLNSDLRKLAVNMVPFPRLHFFMVGFAPLTSPGAHSFRAVTVPELTQQMMDPKNMMAASDFRNGRYLTCSTIFRGKVAMKEVEDQMRTVQNKNSAYFVEWIPNNIQTACALSPPRGLKISSTFVGNSTAIQEIFRRVGEQFSAMFRRQAFLHWYTSEGMDEMEFTEAESNMNDLVSEYQQYQDASADDGEEYEEDAPMEE.

Q13, E71, S140, G144, T145, G146, N206, and N228 together coordinate GTP. E71 contributes to the Mg(2+) binding site. Residues 421–446 (VSEYQQYQDASADDGEEYEEDAPMEE) form a disordered region. Residues 431–446 (SADDGEEYEEDAPMEE) show a composition bias toward acidic residues.

This sequence belongs to the tubulin family. In terms of assembly, dimer of alpha and beta chains. A typical microtubule is a hollow water-filled tube with an outer diameter of 25 nm and an inner diameter of 15 nM. Alpha-beta heterodimers associate head-to-tail to form protofilaments running lengthwise along the microtubule wall with the beta-tubulin subunit facing the microtubule plus end conferring a structural polarity. Microtubules usually have 13 protofilaments but different protofilament numbers can be found in some organisms and specialized cells. Requires Mg(2+) as cofactor.

The protein localises to the cytoplasm. Its subcellular location is the cytoskeleton. Functionally, tubulin is the major constituent of microtubules, a cylinder consisting of laterally associated linear protofilaments composed of alpha- and beta-tubulin heterodimers. Microtubules grow by the addition of GTP-tubulin dimers to the microtubule end, where a stabilizing cap forms. Below the cap, tubulin dimers are in GDP-bound state, owing to GTPase activity of alpha-tubulin. The protein is Tubulin beta-1 chain (tub1) of Hypocrea rufa (Trichoderma viride).